The sequence spans 314 residues: tRNA pseudouridine synthase B (314 aa).

Position 43 (H43) interacts with substrate. Residue D48 is the Nucleophile of the active site. Residues Y76, Y179, and L200 each coordinate substrate.

Belongs to the pseudouridine synthase TruB family. Type 1 subfamily.

It carries out the reaction uridine(55) in tRNA = pseudouridine(55) in tRNA. In terms of biological role, responsible for synthesis of pseudouridine from uracil-55 in the psi GC loop of transfer RNAs. In Serratia proteamaculans (strain 568), this protein is tRNA pseudouridine synthase B.